Here is a 128-residue protein sequence, read N- to C-terminus: Large ribosomal subunit protein bL12 (128 aa).

It belongs to the bacterial ribosomal protein bL12 family. In terms of assembly, homodimer. Part of the ribosomal stalk of the 50S ribosomal subunit. Forms a multimeric L10(L12)X complex, where L10 forms an elongated spine to which 2 to 4 L12 dimers bind in a sequential fashion. Binds GTP-bound translation factors.

In terms of biological role, forms part of the ribosomal stalk which helps the ribosome interact with GTP-bound translation factors. Is thus essential for accurate translation. The chain is Large ribosomal subunit protein bL12 from Streptomyces antibioticus.